We begin with the raw amino-acid sequence, 238 residues long: Heme oxygenase (238 aa).

His-17 contributes to the heme b binding site.

The protein belongs to the heme oxygenase family.

The protein resides in the plastid. It is found in the chloroplast. The enzyme catalyses heme b + 3 reduced [NADPH--hemoprotein reductase] + 3 O2 = biliverdin IXalpha + CO + Fe(2+) + 3 oxidized [NADPH--hemoprotein reductase] + 3 H2O + H(+). Functionally, catalyzes the opening of the heme ring with the release of iron. Key enzyme in the synthesis of the chromophoric part of the photosynthetic antennae. This chain is Heme oxygenase (pbsA), found in Pyropia yezoensis (Susabi-nori).